The chain runs to 247 residues: Exosome complex component Rrp4 (247 aa).

The region spanning 70–143 (GDTVIGLIED…INPILSIKGK (74 aa)) is the S1 motif domain. Positions 149 to 211 (SSGIVIDIPP…EALVEAIQII (63 aa)) constitute a KH domain.

It belongs to the RRP4 family. In terms of assembly, component of the archaeal exosome complex. Forms a trimer of Rrp4 and/or Csl4 subunits. The trimer associates with a hexameric ring-like arrangement composed of 3 Rrp41-Rrp42 heterodimers.

The protein resides in the cytoplasm. Its function is as follows. Non-catalytic component of the exosome, which is a complex involved in RNA degradation. Increases the RNA binding and the efficiency of RNA degradation. Confers strong poly(A) specificity to the exosome. This Sulfurisphaera tokodaii (strain DSM 16993 / JCM 10545 / NBRC 100140 / 7) (Sulfolobus tokodaii) protein is Exosome complex component Rrp4.